The following is a 117-amino-acid chain: Acrylate reductase cytochrome subunit (117 aa).

The first 22 residues, 1-22 (MKMYKLMLGLVLAGLVSLSAQA), serve as a signal peptide directing secretion. The heme c site is built by H29, C37, C40, H41, C54, C57, H58, H79, H83, C90, C93, H94, H97, C104, C107, and H108.

As to quaternary structure, the ArdAB flavocytochrome c is composed of a FAD-containing subunit (ArdA) and a heme c-containing subunit (ArdB). Heme c is required as a cofactor.

It localises to the periplasm. Its activity is regulated as follows. Methacrylate acts as a competitive inhibitor of the acrylate reductase activity and suppresses the reductase activity in dose-dependent manner. Functionally, heme c-containing subunit of the ArdAB flavocytochrome c, which catalyzes the reduction of acrylate to propanoate and supports dimethylsulfoniopropionate-dependent anaerobic respiration. In vitro, can use the artificial electron donor methyl viologen. The natural electron donor is probably a low-potential cytochrome c. Also shows weak activity toward methacrylate in vitro (at a 22-fold lower rate) but cannot use other tested 2-enoates, including crotonic, fumaric, sorbic, urocanic, cinnamic, p-coumaric, caffeic or ferulic acids. The protein catalyzes a unidirectional reaction and cannot oxidize propanoate with phenazine metasulfate and dichlorophenolindophenol as electron acceptors. This chain is Acrylate reductase cytochrome subunit, found in Shewanella woodyi (strain ATCC 51908 / MS32).